Here is a 312-residue protein sequence, read N- to C-terminus: Oxidoreductase NAD-binding domain-containing protein 1 (312 aa).

The signal sequence occupies residues 1–17; sequence MACAAVMIPGLLRCSVG. The FAD-binding FR-type domain occupies 50-186; that stretch reads HMERTASVLR…GGVGINPLLS (137 aa). An NAD(+)-binding site is contributed by 178-183; that stretch reads GVGINP.

This Homo sapiens (Human) protein is Oxidoreductase NAD-binding domain-containing protein 1 (OXNAD1).